The primary structure comprises 269 residues: Spermatogenesis-associated serine-rich protein 1 (269 aa).

The segment covering 1–14 (MESSKDTQHGDALE) has biased composition (basic and acidic residues). The segment at 1 to 92 (MESSKDTQHG…SKVSLPEIPK (92 aa)) is disordered. The segment covering 18-38 (CLANRTSSRQNKRTSLSSSDG) has biased composition (polar residues). Phosphothreonine is present on Thr54. Residues 67–86 (SSSSSSSSSSAQSNRSSKVS) are compositionally biased toward low complexity. 3 positions are modified to phosphoserine: Ser72, Ser75, and Ser82.

This Mus musculus (Mouse) protein is Spermatogenesis-associated serine-rich protein 1 (Spats1).